The primary structure comprises 921 residues: Sodium/calcium exchanger 2 (921 aa).

Positions 1–20 (MAPLALVGVTLLLAAPPCSG) are cleaved as a signal peptide. Over 21–68 (AATPTPSLPPPPANDSDTSTGGCQGSYRCQPGVLLPVWEPDDPSLGDK) the chain is Extracellular. Positions 22–42 (ATPTPSLPPPPANDSDTSTGG) are disordered. Residue asparagine 34 is glycosylated (N-linked (GlcNAc...) asparagine). A helical membrane pass occupies residues 69-90 (AARAVVYFVAMVYMFLGVSIIA). Over 91 to 130 (DRFMAAIEVITSKEKEITITKANGETSVGTVRIWNETVSN) the chain is Cytoplasmic. The chain crosses the membrane as a helical span at residues 131 to 152 (LTLMALGSSAPEILLSVIEVCG). The Alpha-1 repeat unit spans residues 135-175 (ALGSSAPEILLSVIEVCGHNFQAGELGPGTIVGSAAFNMFV). The Extracellular portion of the chain corresponds to 153-164 (HNFQAGELGPGT). The chain crosses the membrane as a helical span at residues 165–185 (IVGSAAFNMFVVIAVCIYVIP). The Cytoplasmic segment spans residues 186-196 (AGESRKIKHLR). The chain crosses the membrane as a helical span at residues 197-219 (VFFVTASWSIFAYVWLYLILAVF). The Extracellular portion of the chain corresponds to 220-222 (SPG). Residues 223-246 (VVQVWEALLTLVFFPVCVVFAWMA) traverse the membrane as a helical segment. Over 247–720 (DKRLLFYKYV…DGSREERLPS (474 aa)) the chain is Cytoplasmic. The putative calmodulin-binding region stretch occupies residues 248 to 267 (KRLLFYKYVYKRYRTDPRSG). Calx-beta domains lie at 384–483 (GAGE…VRLL) and 512–612 (ATVT…IELG). Ca(2+) contacts are provided by glutamate 407, aspartate 443, aspartate 468, aspartate 469, isoleucine 471, glutamate 473, glutamate 476, aspartate 518, aspartate 519, aspartate 520, glutamate 536, aspartate 598, glutamate 599, and glutamate 600. The residue at position 622 (serine 622) is a Phosphoserine. Residue glutamate 665 coordinates Ca(2+). Residues 721-740 (CFDYVMHFLTVFWKVLFACV) traverse the membrane as a helical segment. At 741–747 (PPTEYCH) the chain is on the extracellular side. The chain crosses the membrane as a helical span at residues 748-770 (GWACFGVSILVIGLLTALIGDLA). The Cytoplasmic segment spans residues 771–772 (SH). The helical transmembrane segment at 773 to 791 (FGCTVGLKDSVNAVVFVAL) threads the bilayer. An Alpha-2 repeat occupies 790–826 (ALGTSIPDTFASKVAALQDQCADASIGNVTGSNAVNV). Residues 792 to 822 (GTSIPDTFASKVAALQDQCADASIGNVTGSN) lie on the Extracellular side of the membrane. Asparagine 817 is a glycosylation site (N-linked (GlcNAc...) asparagine). Residues 823 to 843 (AVNVFLGLGVAWSVAAVYWAV) form a helical membrane-spanning segment. The Cytoplasmic portion of the chain corresponds to 844-854 (QGRPFEVRTGT). The chain crosses the membrane as a helical span at residues 855–875 (LAFSVTLFTVFAFVGIAVLLY). The Extracellular portion of the chain corresponds to 876–892 (RRRPHIGGELGGPRGPK). The helical transmembrane segment at 893–909 (LATTALFLGLWLLYILF) threads the bilayer. Residues 910–921 (ASLEAYCHIRGF) are Cytoplasmic-facing.

The protein belongs to the Ca(2+):cation antiporter (CaCA) (TC 2.A.19) family. SLC8 subfamily.

The protein localises to the cell membrane. The protein resides in the basolateral cell membrane. It is found in the perikaryon. Its subcellular location is the cell projection. It localises to the dendrite. The protein localises to the dendritic spine. It carries out the reaction Ca(2+)(in) + 3 Na(+)(out) = Ca(2+)(out) + 3 Na(+)(in). Calcium transport is down-regulated by Na(+) and stimulated by Ca(2+). Mediates the electrogenic exchange of Ca(2+) against Na(+) ions across the cell membrane, and thereby contributes to the regulation of cytoplasmic Ca(2+) levels and Ca(2+)-dependent cellular processes. Contributes to cellular Ca(2+) homeostasis in excitable cells. Contributes to the rapid decrease of cytoplasmic Ca(2+) levels back to baseline after neuronal activation, and thereby contributes to modulate synaptic plasticity, learning and memory. Plays a role in regulating urinary Ca(2+) and Na(+) excretion. The chain is Sodium/calcium exchanger 2 (SLC8A2) from Homo sapiens (Human).